Reading from the N-terminus, the 152-residue chain is MKLILTAEVDHLGEPGDTVEVKDGYGRNYLLPRGLAIVASRGAQRQADDIRRARELKTVKGLEHANEIKTALEALDTVELAVNASADTGKLFGSVTATDVVAAIKKAGGPNLDKRTVALPKAHIKSLGTHSVSVRLHPGVEASVSLNVVAES.

It belongs to the bacterial ribosomal protein bL9 family.

Its function is as follows. Binds to the 23S rRNA. This chain is Large ribosomal subunit protein bL9, found in Mycobacterium sp. (strain JLS).